The sequence spans 87 residues: UPF0250 protein NE1487 (87 aa).

The protein belongs to the UPF0250 family.

In Nitrosomonas europaea (strain ATCC 19718 / CIP 103999 / KCTC 2705 / NBRC 14298), this protein is UPF0250 protein NE1487.